The sequence spans 316 residues: Small kinetochore-associated protein (316 aa).

A Phosphoserine modification is found at Ser-128. The segment at 159 to 316 (VRKGYKPLSK…LKEMEQLLEM (158 aa)) is interaction with SPAG5. Coiled coils occupy residues 166 to 216 (LSKQ…FRDN) and 248 to 316 (SMLL…LLEM).

In terms of assembly, part of an astrin (SPAG5)-kinastrin (SKAP) complex containing KNSTRN, SPAG5, PLK1, DYNLL1 and SGO2. Interacts with SPAG5. Directly binds to microtubules, although at relatively low affinity. Interacts with CENPE; this interaction greatly favors microtubule-binding. Interacts with DSN1/MIS13; leading to localization to kinetochores. Interacts with MAPRE1/EB1; leading to localization to the microtubule plus ends. Interacts with PRPF19. Interacts with DYNLL1. Interacts with MAP4. In terms of tissue distribution, widely expressed, including in skin.

It localises to the nucleus. It is found in the chromosome. The protein resides in the centromere. Its subcellular location is the kinetochore. The protein localises to the cytoplasm. It localises to the cytoskeleton. It is found in the spindle pole. The protein resides in the microtubule organizing center. In terms of biological role, essential component of the mitotic spindle required for faithful chromosome segregation and progression into anaphase. Promotes the metaphase-to-anaphase transition and is required for chromosome alignment, normal timing of sister chromatid segregation, and maintenance of spindle pole architecture. The astrin (SPAG5)-kinastrin (SKAP) complex promotes stable microtubule-kinetochore attachments. Required for kinetochore oscillations and dynamics of microtubule plus-ends during live cell mitosis, possibly by forming a link between spindle microtubule plus-ends and mitotic chromosomes to achieve faithful cell division. May be involved in UV-induced apoptosis via its interaction with PRPF19; however, these results need additional evidences. The chain is Small kinetochore-associated protein from Homo sapiens (Human).